A 126-amino-acid polypeptide reads, in one-letter code: UPF0538 protein C2orf76 homolog (126 aa).

It belongs to the UPF0538 family.

This Pongo abelii (Sumatran orangutan) protein is UPF0538 protein C2orf76 homolog.